A 299-amino-acid polypeptide reads, in one-letter code: Bifunctional protein FolD (299 aa).

Residues 166–168 (GRS), serine 191, and isoleucine 232 each bind NADP(+).

The protein belongs to the tetrahydrofolate dehydrogenase/cyclohydrolase family. As to quaternary structure, homodimer.

The catalysed reaction is (6R)-5,10-methylene-5,6,7,8-tetrahydrofolate + NADP(+) = (6R)-5,10-methenyltetrahydrofolate + NADPH. The enzyme catalyses (6R)-5,10-methenyltetrahydrofolate + H2O = (6R)-10-formyltetrahydrofolate + H(+). It participates in one-carbon metabolism; tetrahydrofolate interconversion. Its function is as follows. Catalyzes the oxidation of 5,10-methylenetetrahydrofolate to 5,10-methenyltetrahydrofolate and then the hydrolysis of 5,10-methenyltetrahydrofolate to 10-formyltetrahydrofolate. The protein is Bifunctional protein FolD of Dinoroseobacter shibae (strain DSM 16493 / NCIMB 14021 / DFL 12).